The primary structure comprises 582 residues: A-type ATP synthase subunit A 1 (582 aa).

Residue 231-238 coordinates ATP; it reads GPFGSGKT.

This sequence belongs to the ATPase alpha/beta chains family. In terms of assembly, has multiple subunits with at least A(3), B(3), C, D, E, F, H, I and proteolipid K(x).

It is found in the cell membrane. The enzyme catalyses ATP + H2O + 4 H(+)(in) = ADP + phosphate + 5 H(+)(out). Functionally, component of the A-type ATP synthase that produces ATP from ADP in the presence of a proton gradient across the membrane. The A chain is the catalytic subunit. This chain is A-type ATP synthase subunit A 1, found in Methanospirillum hungatei JF-1 (strain ATCC 27890 / DSM 864 / NBRC 100397 / JF-1).